We begin with the raw amino-acid sequence, 393 residues long: Phospholipid-transporting ATPase accessory subunit CRF1 (393 aa).

Topologically, residues 1–46 (MGLILRWKEKKQLSSKQNAQKSRKPANTSFRQQRLKAWQPILSPQS) are cytoplasmic. The helical transmembrane segment at 47–67 (VLPLLILMACVFAPIGIGLVV) threads the bilayer. Residues 68–334 (STISVQRLVV…NSIIGAGNEA (267 aa)) lie on the Lumenal side of the membrane. The interval 70 to 332 (ISVQRLVVNY…TTNSIIGAGN (263 aa)) is confers specificity for binding DNF3. Asn-78, Asn-123, Asn-187, Asn-202, Asn-213, Asn-240, and Asn-291 each carry an N-linked (GlcNAc...) asparagine glycan. Disulfide bonds link Cys-82–Cys-126 and Cys-179–Cys-193. A helical transmembrane segment spans residues 335–355 (LGIVYLIVAGIATLFAILFLI). Residues 356–393 (KVIFKPRPMHDHSYLNFENSDTPFDESSVVSIPLREIL) are Cytoplasmic-facing.

It belongs to the CDC50/LEM3 family. In terms of assembly, component of a flippase complex consisting of DNF3 and YNR048W/CRF1. Interacts with DNF3; the interaction is direct and required for proper expression and endoplasmic reticulum (ER) export of either partner.

It localises to the golgi apparatus. The protein localises to the trans-Golgi network membrane. Its function is as follows. Accessory component of a P4-ATPase flippase complex which catalyzes the hydrolysis of ATP coupled to the transport of phosphatidylcholine and small amounts of phosphatidylethanolamine from the lumen to the cytosolic leaflet of the trans-Golgi network and ensures the maintenance of asymmetric distribution of phospholipids. May be involved in transport from early endosomes to the trans-Golgi network (TGN). The protein is Phospholipid-transporting ATPase accessory subunit CRF1 of Saccharomyces cerevisiae (strain ATCC 204508 / S288c) (Baker's yeast).